Here is a 318-residue protein sequence, read N- to C-terminus: NADH-ubiquinone oxidoreductase chain 1 (318 aa).

8 consecutive transmembrane segments (helical) span residues 2-22 (FLMNLLLLIIPILVAMAFLTL), 68-88 (ISLFIIAPSLALTLAFTMWIP), 102-122 (ILFILATSSLAVYTILWSGWA), 146-166 (LAIILLSVLLLNGSFTLSSLI), 171-191 (FTWLLLPTWPLAMMWFISTLA), 217-237 (AGPFALFFMAEYTNIIMMNAL), 253-273 (EMFTFSFTLKTLMLTATFLWI), and 294-314 (LPLTLALCMWHISLPVIMACI).

This sequence belongs to the complex I subunit 1 family.

It localises to the mitochondrion inner membrane. The catalysed reaction is a ubiquinone + NADH + 5 H(+)(in) = a ubiquinol + NAD(+) + 4 H(+)(out). In terms of biological role, core subunit of the mitochondrial membrane respiratory chain NADH dehydrogenase (Complex I) that is believed to belong to the minimal assembly required for catalysis. Complex I functions in the transfer of electrons from NADH to the respiratory chain. The immediate electron acceptor for the enzyme is believed to be ubiquinone. In Tamias sibiricus (Siberian chipmunk), this protein is NADH-ubiquinone oxidoreductase chain 1 (MT-ND1).